The sequence spans 165 residues: 3-isopropylmalate dehydratase small subunit (165 aa).

The protein belongs to the LeuD family. LeuD type 2 subfamily. Heterodimer of LeuC and LeuD.

It carries out the reaction (2R,3S)-3-isopropylmalate = (2S)-2-isopropylmalate. It participates in amino-acid biosynthesis; L-leucine biosynthesis; L-leucine from 3-methyl-2-oxobutanoate: step 2/4. Its function is as follows. Catalyzes the isomerization between 2-isopropylmalate and 3-isopropylmalate, via the formation of 2-isopropylmaleate. The sequence is that of 3-isopropylmalate dehydratase small subunit from Helicobacter hepaticus (strain ATCC 51449 / 3B1).